The primary structure comprises 229 residues: MSPLTRIALALAASAALVLALTACGPAHVAGYVPKRRDYAVPDASGQDTQAASAGSTWREGRAASMLYTDARALRENDLVVVRIEEIADAKRSADTDLTRRSELNASIEAFLTSLSTPYALKGGADSGFKGLGSTARTERLTATVPAVVRKVLPNGNLFIEGHRVVLVNAEEQHFYISGVVRPIDIDQENGVKSSMVADAEIEFTGRGVLSDNQRQGWLSRLLGWFWPF.

The N-terminal stretch at 1–23 is a signal peptide; it reads MSPLTRIALALAASAALVLALTA. Cys24 is lipidated: N-palmitoyl cysteine. The S-diacylglycerol cysteine moiety is linked to residue Cys24.

It belongs to the FlgH family. The basal body constitutes a major portion of the flagellar organelle and consists of four rings (L,P,S, and M) mounted on a central rod.

It is found in the cell outer membrane. The protein localises to the bacterial flagellum basal body. Functionally, assembles around the rod to form the L-ring and probably protects the motor/basal body from shearing forces during rotation. The protein is Flagellar L-ring protein of Anaeromyxobacter dehalogenans (strain 2CP-C).